A 466-amino-acid polypeptide reads, in one-letter code: 3-isopropylmalate dehydratase large subunit (466 aa).

[4Fe-4S] cluster is bound by residues Cys347, Cys407, and Cys410.

This sequence belongs to the aconitase/IPM isomerase family. LeuC type 1 subfamily. Heterodimer of LeuC and LeuD. Requires [4Fe-4S] cluster as cofactor.

The enzyme catalyses (2R,3S)-3-isopropylmalate = (2S)-2-isopropylmalate. The protein operates within amino-acid biosynthesis; L-leucine biosynthesis; L-leucine from 3-methyl-2-oxobutanoate: step 2/4. Functionally, catalyzes the isomerization between 2-isopropylmalate and 3-isopropylmalate, via the formation of 2-isopropylmaleate. In Buchnera aphidicola subsp. Diuraphis noxia, this protein is 3-isopropylmalate dehydratase large subunit.